Consider the following 485-residue polypeptide: MTITPQHLIALLPLLIVGLTVVVVMLSIAWRRNHFLNATLSVIGLNAALVSLWFVGQAGAMDVTPLMRVDGFAMLYTGLVLLASLATCTFAYPWLEGYNDNQEEFYLLVLIASLGGILLANANHLAALFLGIELISLPLFGLIGYAFRQKRSLEASIKYTILSAAASSFLLFGMALVYAQSGNLSFEALGKSLGDGMLHEPLLLAGFGLMIVGLGFKLSLVPFHLWTPDVYQGAPAPVSTFLATASKIAIFGVVMRLFLYAPVGDSEAVRVVLGIIAFASIIFGNLMALSQTNIKRLLGYSSISHLGYLLVALIALQSGEMSMEAVGVYLAGYLFSSLGAFGVVSLMSSPFRGPDADSLYSYRGLFWHRPVLAAVMTVMMLSLAGIPMTLGFIGKFYVLAVGVQASLWWLVAAVVVGSAIGLYYYLRVAVSLYLHAPQQPGRDAPTNWQYSAGGIVVLISALLVLVLGVWPQPLISLVQLATPLM.

14 helical membrane passes run 8–28 (LIAL…MLSI), 35–55 (FLNA…LWFV), 71–91 (GFAM…CTFA), 105–125 (FYLL…ANHL), 127–147 (ALFL…GYAF), 159–179 (YTIL…LVYA), 203–223 (LLAG…LVPF), 235–255 (PAPV…GVVM), 271–291 (VVLG…ALSQ), 297–317 (LLGY…IALQ), 326–346 (VGVY…VVSL), 373–393 (AAVM…LGFI), 408–430 (WWLV…RVAV), and 455–475 (IVVL…QPLI).

The protein belongs to the complex I subunit 2 family. As to quaternary structure, NDH-1 is composed of 13 different subunits. Subunits NuoA, H, J, K, L, M, N constitute the membrane sector of the complex.

The protein localises to the cell inner membrane. It carries out the reaction a quinone + NADH + 5 H(+)(in) = a quinol + NAD(+) + 4 H(+)(out). In terms of biological role, NDH-1 shuttles electrons from NADH, via FMN and iron-sulfur (Fe-S) centers, to quinones in the respiratory chain. The immediate electron acceptor for the enzyme in this species is believed to be ubiquinone. Couples the redox reaction to proton translocation (for every two electrons transferred, four hydrogen ions are translocated across the cytoplasmic membrane), and thus conserves the redox energy in a proton gradient. The polypeptide is NADH-quinone oxidoreductase subunit N (Salmonella schwarzengrund (strain CVM19633)).